Consider the following 318-residue polypeptide: NADH-ubiquinone oxidoreductase chain 1 (318 aa).

The next 8 membrane-spanning stretches (helical) occupy residues 2–22, 70–90, 100–120, 146–166, 171–191, 222–242, 254–276, and 294–314; these read FTIN…FLTL, MFII…IPLP, LGVL…LWSG, LAII…STLI, HLWL…STLA, LFFM…TILF, LYTI…IRAS, and LPLT…TSSI.

The protein belongs to the complex I subunit 1 family. Core subunit of respiratory chain NADH dehydrogenase (Complex I) which is composed of 45 different subunits.

It is found in the mitochondrion inner membrane. The enzyme catalyses a ubiquinone + NADH + 5 H(+)(in) = a ubiquinol + NAD(+) + 4 H(+)(out). In terms of biological role, core subunit of the mitochondrial membrane respiratory chain NADH dehydrogenase (Complex I) which catalyzes electron transfer from NADH through the respiratory chain, using ubiquinone as an electron acceptor. Essential for the catalytic activity and assembly of complex I. This is NADH-ubiquinone oxidoreductase chain 1 (MT-ND1) from Ceratotherium simum (White rhinoceros).